A 494-amino-acid chain; its full sequence is Costunolide synthase (494 aa).

The helical transmembrane segment at 3–23 (PLTIVSLVVASLFLFAFWALS) threads the bilayer. Cys-432 lines the heme pocket.

It belongs to the cytochrome P450 family. Heme serves as cofactor.

It localises to the membrane. It catalyses the reaction germacra-1(10),4,11(13)-trien-12-oate + reduced [NADPH--hemoprotein reductase] + O2 = (+)-costunolide + oxidized [NADPH--hemoprotein reductase] + 2 H2O. Functionally, hydroxylates germacrene A acid to 6-alpha-hydroxy-germacrne A acid, a precursor of sesquiterpene lactones that spontaneously undergoes a lactonization which yields costunolide. Costunolide can then spontaneously conjugate to glutathione or cysteine. This Cichorium intybus (Chicory) protein is Costunolide synthase (CYP71BL3).